The primary structure comprises 137 residues: Large ribosomal subunit protein uL16 (137 aa).

The protein belongs to the universal ribosomal protein uL16 family. Part of the 50S ribosomal subunit.

In terms of biological role, binds 23S rRNA and is also seen to make contacts with the A and possibly P site tRNAs. The chain is Large ribosomal subunit protein uL16 from Sorangium cellulosum (strain So ce56) (Polyangium cellulosum (strain So ce56)).